A 312-amino-acid polypeptide reads, in one-letter code: Pre-mRNA-splicing factor 38A (312 aa).

The N-terminal protein interaction domain stretch occupies residues 1–179 (MANRTVKDAH…VLEETEQLDP (179 aa)). The segment at 180–312 (RVSALEEDMD…SHKKSRRGNE (133 aa)) is disordered. The segment covering 184–201 (LEEDMDDVESSEEEEDED) has biased composition (acidic residues). The segment covering 202–223 (EKGRDPSPEHHRRNYRDLDRPR) has biased composition (basic and acidic residues). 2 stretches are compositionally biased toward basic residues: residues 224 to 294 (RSPS…RSHS) and 301 to 312 (KKSHKKSRRGNE).

It belongs to the PRP38 family. In terms of assembly, component of the spliceosome B complex.

It is found in the nucleus. In terms of biological role, involved in pre-mRNA splicing as a component of the spliceosome. This chain is Pre-mRNA-splicing factor 38A (prpf38a), found in Xenopus tropicalis (Western clawed frog).